Here is a 321-residue protein sequence, read N- to C-terminus: MADAGDNQQEAERRSDETESRSIKEPKEKEDEDENPQDQIQSKERMRQSSPYPVRPGKKDCQFYLKNGLCRYRSSCRFNHPTQRPQELPVRICKHIMDRNVAEPMYQDWRESESERRFDERTQRTFGDERTQRRYGIEYSGARPEKRSKIVPDFQMRDPRHHDTEWRFERERMERIERQRREAEENLQEQRQRDSIERQRREAEENLQEQRQRDSIERQRREAQENLQQQRQRDSIERQRREAQENLQQQRLQDMPENHNVDDQQNLQEQRRISIEKERTEARLRLEQIRPTVSFPINEFIRAVVLLRELIENWDDKAWKK.

Disordered regions lie at residues 1–59 (MADA…PGKK) and 181–269 (REAE…NLQE). The segment covering 10–29 (EAERRSDETESRSIKEPKEK) has biased composition (basic and acidic residues). A C3H1-type zinc finger spans residues 55-83 (RPGKKDCQFYLKNGLCRYRSSCRFNHPTQ). Residues 164–290 (TEWRFERERM…EARLRLEQIR (127 aa)) adopt a coiled-coil conformation. 2 stretches are compositionally biased toward basic and acidic residues: residues 181-224 (REAE…REAQ) and 231-244 (RQRDSIERQRREAQ).

This Arabidopsis thaliana (Mouse-ear cress) protein is Putative zinc finger CCCH domain-containing protein 9.